The sequence spans 552 residues: Phosphoglucomutase (552 aa).

Ser143 serves as the catalytic Phosphoserine intermediate. Positions 143, 295, 297, and 299 each coordinate Mg(2+).

Belongs to the phosphohexose mutase family. It depends on Mg(2+) as a cofactor.

It carries out the reaction alpha-D-glucose 1-phosphate = alpha-D-glucose 6-phosphate. It functions in the pathway glycolipid metabolism; diglucosyl-diacylglycerol biosynthesis. Catalyzes the interconversion between glucose-6-phosphate and alpha-glucose-1-phosphate. This is the first step in the biosynthesis of diglucosyl-diacylglycerol (Glc2-DAG), i.e. the predominant glycolipid found in the S.aureus membrane, which is also used as a membrane anchor for lipoteichoic acid (LTA). The protein is Phosphoglucomutase (pgcA) of Staphylococcus aureus (strain USA300).